Reading from the N-terminus, the 216-residue chain is Adenylate kinase (216 aa).

10–15 (GAGKGT) contributes to the ATP binding site. The tract at residues 30–59 (STGDMLREAVKADTPLGIEAKKVMDVGGLI) is NMP. AMP contacts are provided by residues threonine 31, arginine 36, 57 to 59 (GLI), 85 to 88 (GFPR), and glutamine 92. The tract at residues 122–159 (GRRAHLTSGRTYHIVYNPPKVEGIDDITGEELIQRTDD) is LID. ATP contacts are provided by residues arginine 123 and 132 to 133 (TY). Residues arginine 156 and arginine 167 each coordinate AMP. Glycine 202 lines the ATP pocket.

This sequence belongs to the adenylate kinase family. Monomer.

The protein resides in the cytoplasm. The catalysed reaction is AMP + ATP = 2 ADP. The protein operates within purine metabolism; AMP biosynthesis via salvage pathway; AMP from ADP: step 1/1. In terms of biological role, catalyzes the reversible transfer of the terminal phosphate group between ATP and AMP. Plays an important role in cellular energy homeostasis and in adenine nucleotide metabolism. This Ruthia magnifica subsp. Calyptogena magnifica protein is Adenylate kinase.